The primary structure comprises 456 residues: Choline kinase (456 aa).

This sequence belongs to the choline/ethanolamine kinase family. Monomer. Requires Mg(2+) as cofactor.

The protein resides in the cytoplasm. It localises to the nucleus. It carries out the reaction choline + ATP = phosphocholine + ADP + H(+). Its pathway is phospholipid metabolism; phosphatidylcholine biosynthesis; phosphocholine from choline: step 1/1. Its function is as follows. Catalyzes the committed step in the synthesis of phosphatidylcholine by the CDP-choline pathway. This chain is Choline kinase, found in Schizosaccharomyces pombe (strain 972 / ATCC 24843) (Fission yeast).